A 216-amino-acid polypeptide reads, in one-letter code: GTP cyclohydrolase 1 (216 aa).

Residues cysteine 108, histidine 111, and cysteine 179 each coordinate Zn(2+).

The protein belongs to the GTP cyclohydrolase I family. Toroid-shaped homodecamer, composed of two pentamers of five dimers.

The enzyme catalyses GTP + H2O = 7,8-dihydroneopterin 3'-triphosphate + formate + H(+). It participates in cofactor biosynthesis; 7,8-dihydroneopterin triphosphate biosynthesis; 7,8-dihydroneopterin triphosphate from GTP: step 1/1. The chain is GTP cyclohydrolase 1 from Shewanella oneidensis (strain ATCC 700550 / JCM 31522 / CIP 106686 / LMG 19005 / NCIMB 14063 / MR-1).